The primary structure comprises 119 residues: Phospholipase A2 A2-actitoxin-Cgg2a (119 aa).

6 cysteine pairs are disulfide-bonded: Cys25-Cys119, Cys27-Cys43, Cys42-Cys101, Cys49-Cys94, Cys61-Cys87, and Cys78-Cys92. Ca(2+) is bound by residues Gly28 and Gly30. The active site involves His46. Residue Asp47 coordinates Ca(2+). Asp95 is a catalytic residue.

It belongs to the phospholipase A2 family. In terms of assembly, homodimer. Ca(2+) serves as cofactor.

Its subcellular location is the secreted. It localises to the nematocyst. The catalysed reaction is a 1,2-diacyl-sn-glycero-3-phosphocholine + H2O = a 1-acyl-sn-glycero-3-phosphocholine + a fatty acid + H(+). Its function is as follows. Sea anemone phospholipase A2 (PLA2). When incubated with plasma, this protein shows a moderate anticoagulant activity (0.15 ug of enzyme/200 uL of plasma), inhibiting clotting induced by thrombin. This enzyme also induces myotoxicity, and edema. PLA2 catalyzes the calcium-dependent hydrolysis of the 2-acyl groups in 3-sn-phosphoglycerides. The polypeptide is Phospholipase A2 A2-actitoxin-Cgg2a (Condylactis gigantea (Giant Caribbean anemone)).